The following is a 349-amino-acid chain: Hypoxia-inducible factor 1-alpha inhibitor (349 aa).

A compositionally biased stretch (low complexity) spans Met1 to Ala10. Positions Met1–Arg51 are disordered. Ala2 carries the post-translational modification N-acetylalanine. An interaction with VHL region spans residues Ala2–Phe125. The JmjC domain occupies Glu142 to Ala312. Residue Tyr145 coordinates 2-oxoglutarate. Residues Asp152 and Gln181–Thr183 each bind substrate. Residue Thr196 coordinates 2-oxoglutarate. His199 and Asp201 together coordinate Fe cation. Asp201–Gln203 contacts substrate. 2-oxoglutarate-binding residues include Asn205 and Lys214. Arg238–Gln239 contributes to the substrate binding site. Residue His279 participates in Fe cation binding. Asn294 contributes to the 2-oxoglutarate binding site. Residues Ala300 and Asn321 each contribute to the substrate site.

Homodimer; homodimerization is essential for catalytic activity. Interacts with VHL and HIF1A. Part of a complex with VHL, HIF1A and HDAC1 or HDAC2 or HDAC3. Interacts with NFKB1 and NFKBIA. Interacts with NOTCH1, NOTCH2 and NOTCH3 but not with NOTCH4. Interacts with APBA3; binding inhibits HIF1AN binding to HIF1A. Interacts with TNKS2. Interacts with PPP1R12A. Interacts with ASB4. Interacts with UBE3A. Interacts with ANKS3. Interacts with NECAB3; the interaction is indirect and seems to be mediated by APBA3. Requires Fe(2+) as cofactor.

It localises to the nucleus. The protein resides in the cytoplasm. Its subcellular location is the perinuclear region. It catalyses the reaction L-asparaginyl-[hypoxia-inducible factor alpha subunit] + 2-oxoglutarate + O2 = (3S)-3-hydroxy-L-asparaginyl-[hypoxia-inducible factor alpha subunit] + succinate + CO2. It carries out the reaction L-histidyl-[ankyrin-repeat domain protein] + 2-oxoglutarate + O2 = (3S)-3-hydroxy-L-histidyl-[ankyrin-repeat domain protein] + succinate + CO2. The enzyme catalyses L-asparaginyl-[ankyrin-repeat domain protein] + 2-oxoglutarate + O2 = (3S)-3-hydroxy-L-asparaginyl-[ankyrin-repeat domain protein] + succinate + CO2. The catalysed reaction is L-aspartyl-[ankyrin-repeat domain protein] + 2-oxoglutarate + O2 = (3S)-3-hydroxy-L-aspartyl-[ankyrin-repeat domain protein] + succinate + CO2. Hydroxylates HIF-1 alpha at 'Asn-803' in the C-terminal transactivation domain (CAD). Functions as an oxygen sensor and, under normoxic conditions, the hydroxylation prevents interaction of HIF-1 with transcriptional coactivators including Cbp/p300-interacting transactivator. Involved in transcriptional repression through interaction with HIF1A, VHL and histone deacetylases. Hydroxylates specific Asn residues within ankyrin repeat domains (ARD) of NFKB1, NFKBIA, NOTCH1, ASB4, PPP1R12A and several other ARD-containing proteins. Also hydroxylates Asp and His residues within ARDs of ANK1 and TNKS2, respectively. Negatively regulates NOTCH1 activity, accelerating myogenic differentiation. Positively regulates ASB4 activity, promoting vascular differentiation. The chain is Hypoxia-inducible factor 1-alpha inhibitor (HIF1AN) from Homo sapiens (Human).